Reading from the N-terminus, the 332-residue chain is Hygromycin-B 7''-O-kinase (332 aa).

D223 acts as the Proton acceptor in catalysis.

It belongs to the aminoglycoside phosphotransferase family.

It carries out the reaction hygromycin B + ATP = 7''-O-phosphohygromycin B + ADP + H(+). In terms of biological role, the aminoglycoside phosphotransferases achieve inactivation of their antibiotic substrates by phosphorylation. This is Hygromycin-B 7''-O-kinase (hyg) from Streptomyces hygroscopicus.